A 1913-amino-acid polypeptide reads, in one-letter code: GREB1-like protein (1913 aa).

Residues 86-96 (MEDDEDEEEMS) show a composition bias toward acidic residues. 4 disordered regions span residues 86–111 (MEDD…KPAP), 281–309 (NGTS…SPRP), 1097–1157 (EAER…TSSI), and 1179–1207 (DSLD…LAWS). Residues 289–301 (KSSSCSSTPSRPG) are compositionally biased toward low complexity. A compositionally biased stretch (polar residues) spans 1118–1157 (PQSNSSAVTGTSGSIMENGVSSSSTAGKPQQQLLTPTSSI). Residues 1187 to 1200 (SSTTSKPSSSSSSS) are compositionally biased toward low complexity. The chain crosses the membrane as a helical span at residues 1832-1852 (GVFFSGLLLYLCDSFVGADLL).

Belongs to the GREB1 family. Expressed in the inner ear, with a high presence in the spiral ganglia, cochlear nerve bundles, and hair cells.

The protein localises to the membrane. Plays a major role in early metanephros and genital development. The protein is GREB1-like protein (Greb1l) of Mus musculus (Mouse).